Here is a 147-residue protein sequence, read N- to C-terminus: Ribosome-binding factor A (147 aa).

The tract at residues 122-147 (QQQFGSVDDDVIENDIEESDDTEGKV) is disordered. The segment covering 128 to 147 (VDDDVIENDIEESDDTEGKV) has biased composition (acidic residues).

Belongs to the RbfA family. Monomer. Binds 30S ribosomal subunits, but not 50S ribosomal subunits or 70S ribosomes.

The protein resides in the cytoplasm. In terms of biological role, one of several proteins that assist in the late maturation steps of the functional core of the 30S ribosomal subunit. Associates with free 30S ribosomal subunits (but not with 30S subunits that are part of 70S ribosomes or polysomes). Required for efficient processing of 16S rRNA. May interact with the 5'-terminal helix region of 16S rRNA. The polypeptide is Ribosome-binding factor A (Shewanella oneidensis (strain ATCC 700550 / JCM 31522 / CIP 106686 / LMG 19005 / NCIMB 14063 / MR-1)).